Consider the following 405-residue polypeptide: ATP-sensitive inward rectifier potassium channel 15 (405 aa).

Topologically, residues 1–90 are cytoplasmic; sequence MVARWVKGSE…LQDLWTTVID (90 aa). The helical transmembrane segment at 91-117 threads the bilayer; it reads MKWRYKLTLFAATFVMTWFLFGVVYYA. Over 118 to 143 the chain is Extracellular; sequence IAFIHGDLELGESNSNHTPCIMKVDS. Residues 144–160 constitute an intramembrane region (helical; Pore-forming); sequence LTGAFLFSLESQTTIGY. Residues 157–162 carry the Selectivity filter motif; sequence TIGYGV. Residues 161–169 are Extracellular-facing; the sequence is GVRSITEEC. The helical transmembrane segment at 170 to 195 threads the bilayer; the sequence is PHAIFLLVAQLVITTLIEIFITGTFL. Residues 196–405 are Cytoplasmic-facing; the sequence is AKIARPKKRA…RSLLLQQSNV (210 aa).

Belongs to the inward rectifier-type potassium channel (TC 1.A.2.1) family. KCNJ15 subfamily. Can form heteromultimeric channels with Kir5.1/KCNJ16. Interacts with PATJ.

Its subcellular location is the membrane. The protein localises to the cell membrane. The enzyme catalyses K(+)(in) = K(+)(out). Its activity is regulated as follows. Channel activity is regulated by variations of cytosolic pH; reversibly inhibited by acidic pH values. Inhibited by Ba(2+) and Cs(+) in a voltage-dependent manner. Inward rectifier potassium channels are characterized by a greater tendency to allow potassium to flow into the cell rather than out of it. Their voltage dependence is regulated by the concentration of extracellular potassium; as external potassium is raised, the voltage range of the channel opening shifts to more positive voltages. The inward rectification is mainly due to the blockage of outward current by internal magnesium. This Rattus norvegicus (Rat) protein is ATP-sensitive inward rectifier potassium channel 15 (Kcnj15).